Reading from the N-terminus, the 460-residue chain is tRNA modification GTPase MnmE (460 aa).

Residues arginine 22, glutamate 87, and arginine 126 each contribute to the (6S)-5-formyl-5,6,7,8-tetrahydrofolate site. Positions 222–381 (GLKTAIIGKP…LENTIYNLVF (160 aa)) constitute a TrmE-type G domain. K(+) is bound at residue asparagine 232. Residues 232 to 237 (NVGKSS), 251 to 257 (TDIPGTT), and 276 to 279 (DTAG) contribute to the GTP site. Residue serine 236 coordinates Mg(2+). K(+)-binding residues include threonine 251, isoleucine 253, and threonine 256. Threonine 257 contacts Mg(2+). Lysine 460 is a (6S)-5-formyl-5,6,7,8-tetrahydrofolate binding site.

The protein belongs to the TRAFAC class TrmE-Era-EngA-EngB-Septin-like GTPase superfamily. TrmE GTPase family. As to quaternary structure, homodimer. Heterotetramer of two MnmE and two MnmG subunits. K(+) is required as a cofactor.

It is found in the cytoplasm. In terms of biological role, exhibits a very high intrinsic GTPase hydrolysis rate. Involved in the addition of a carboxymethylaminomethyl (cmnm) group at the wobble position (U34) of certain tRNAs, forming tRNA-cmnm(5)s(2)U34. The polypeptide is tRNA modification GTPase MnmE (Thermoanaerobacter sp. (strain X514)).